A 338-amino-acid polypeptide reads, in one-letter code: Malate dehydrogenase, mitochondrial (338 aa).

The transit peptide at 1 to 24 (MLSALARPASAALRRSFSTSAQNN) directs the protein to the mitochondrion. NAD(+) is bound by residues 31 to 37 (GASGGIG) and D57. The O-linked (GlcNAc) serine glycan is linked to S33. An N6-acetyllysine; alternate mark is found at K78 and K91. N6-succinyllysine; alternate is present on residues K78 and K91. Residues R104 and R110 each coordinate substrate. NAD(+) contacts are provided by residues N117 and 140–142 (IAN). N142 contacts substrate. The residue at position 165 (K165) is an N6-acetyllysine. R176 serves as a coordination point for substrate. Position 185 is an N6-acetyllysine; alternate (K185). K185 bears the N6-succinyllysine; alternate mark. Catalysis depends on H200, which acts as the Proton acceptor. Residue K203 is modified to N6-succinyllysine. An N6-acetyllysine; alternate mark is found at K215 and K239. An N6-succinyllysine; alternate mark is found at K215 and K239. N6-malonyllysine; alternate is present on K239. S246 carries the phosphoserine modification. M251 is a binding site for NAD(+). K269 carries the post-translational modification N6-succinyllysine. Residues K296, K301, K307, K314, and K324 each carry the N6-acetyllysine; alternate modification. An N6-succinyllysine; alternate mark is found at K296, K301, K307, K314, and K324. K307 is modified (N6-malonyllysine; alternate). Position 326 is a phosphoserine (S326). Residues K328, K329, and K335 each carry the N6-acetyllysine; alternate modification. K328 carries the N6-succinyllysine; alternate modification. Position 329 is an N6-malonyllysine; alternate (K329). Residue K335 is modified to N6-succinyllysine; alternate.

This sequence belongs to the LDH/MDH superfamily. MDH type 1 family. In terms of assembly, homodimer. In terms of processing, acetylation is enhanced by up to 67% after treatment either with trichostin A (TSA) or with nicotinamide (NAM) with the appearance of tri- and tetraacetylations. Glucose also increases acetylation by about 60%.

The protein resides in the mitochondrion matrix. It catalyses the reaction (S)-malate + NAD(+) = oxaloacetate + NADH + H(+). Enzyme activity is enhanced by acetylation. This is Malate dehydrogenase, mitochondrial (MDH2) from Homo sapiens (Human).